Consider the following 85-residue polypeptide: Large ribosomal subunit protein bL27 (85 aa).

The protein belongs to the bacterial ribosomal protein bL27 family.

This Campylobacter fetus subsp. fetus (strain 82-40) protein is Large ribosomal subunit protein bL27.